Here is a 656-residue protein sequence, read N- to C-terminus: Ankyrin repeat and SAM domain-containing protein 3 (656 aa).

The interval 1–422 is interaction with NEK7; that stretch reads MSELSDEASE…AESSPQTQRA (422 aa). 2 positions are modified to phosphoserine: Ser2 and Ser5. ANK repeat units lie at residues 34–64, 68–97, 101–130, 134–163, 168–197, and 201–220; these read DVPLDLHTAASIGQYEVVKECVQRRELDLNK, GGWTPLMYASYIGHDTIVHLLLEAGVSVNV, EGQTPLMLASSCGNESIAYFLLQQGAELEM, QGWTALFHCTSAGHQHMVRFLLDSGANANV, CGFTPLMEAAAAGHEIIVQYFLNHGVKVDA, and SGATARMLAKQYGHMKIVAL. Position 96 is a 3-hydroxyasparagine (Asn96). Residues Ser201, Ser225, Ser243, Ser244, and Ser245 each carry the phosphoserine modification. Disordered stretches follow at residues 235-265 and 277-312; these read SPEKYEDLSSSDESCPAPQRQRPCRKKGVSI and GIGLGGRAPRPRYEQAPPRGYVTFNSSGENPLEEEG. Thr319 carries the post-translational modification Phosphothreonine. Residues Ser320, Ser368, Ser371, and Ser375 each carry the phosphoserine modification. The interval 346–425 is disordered; the sequence is GPVQSSSSSE…SPQTQRAPYS (80 aa). One can recognise an SAM domain in the interval 425 to 488; the sequence is SGPQDLAALL…TSAIARWHSS (64 aa). Residues 501–526 are a coiled coil; it reads ADRLEAEMQELAIQLHKRCEEVEATR. At Ser541 the chain carries Phosphoserine.

As to quaternary structure, homooligomer. Interacts (via SAM domain) with ANKS6 (via SAM domain). Interacts with BICC1. Interacts with NPHP1. Interacts with NEK8. Interacts with HIF1AN. Interacts with NEK7; this interaction alters the subcellular distribution of NEK7 by preventing its nuclear translocation. Post-translationally, hydroxylated at Asn-96, most probably by HIF1AN. Phosphorylations at Ser-5, Ser-225, Thr-319, Ser-320, Ser-368 and Ser-371 occur in a NEK7-dependent manner. In terms of processing, polyubiquitinated.

Its subcellular location is the cell projection. It is found in the cilium. The protein resides in the cytoplasm. Its function is as follows. May be involved in vasopressin signaling in the kidney. The protein is Ankyrin repeat and SAM domain-containing protein 3 (ANKS3) of Homo sapiens (Human).